Consider the following 96-residue polypeptide: Co-chaperonin GroES (96 aa).

Belongs to the GroES chaperonin family. As to quaternary structure, heptamer of 7 subunits arranged in a ring. Interacts with the chaperonin GroEL.

The protein localises to the cytoplasm. Functionally, together with the chaperonin GroEL, plays an essential role in assisting protein folding. The GroEL-GroES system forms a nano-cage that allows encapsulation of the non-native substrate proteins and provides a physical environment optimized to promote and accelerate protein folding. GroES binds to the apical surface of the GroEL ring, thereby capping the opening of the GroEL channel. This chain is Co-chaperonin GroES, found in Chromohalobacter salexigens (strain ATCC BAA-138 / DSM 3043 / CIP 106854 / NCIMB 13768 / 1H11).